The sequence spans 180 residues: Translation initiation factor IF-3 (180 aa).

Belongs to the IF-3 family. In terms of assembly, monomer.

Its subcellular location is the cytoplasm. IF-3 binds to the 30S ribosomal subunit and shifts the equilibrium between 70S ribosomes and their 50S and 30S subunits in favor of the free subunits, thus enhancing the availability of 30S subunits on which protein synthesis initiation begins. The polypeptide is Translation initiation factor IF-3 (Pasteurella multocida (strain Pm70)).